The primary structure comprises 196 residues: Small ribosomal subunit protein uS4C (196 aa).

In terms of domain architecture, S4 RNA-binding spans 87–149; the sequence is CRLDNVVYRI…HRQNEMFSNN (63 aa).

The protein belongs to the universal ribosomal protein uS4 family. As to quaternary structure, part of the 30S ribosomal subunit. Contacts protein S5. The interaction surface between S4 and S5 is involved in control of translational fidelity.

One of the primary rRNA binding proteins, it binds directly to 16S rRNA where it nucleates assembly of the body of the 30S subunit. Its function is as follows. With S5 and S12 plays an important role in translational accuracy. This chain is Small ribosomal subunit protein uS4C (rpsD3), found in Clostridium acetobutylicum (strain ATCC 824 / DSM 792 / JCM 1419 / IAM 19013 / LMG 5710 / NBRC 13948 / NRRL B-527 / VKM B-1787 / 2291 / W).